The sequence spans 749 residues: Disintegrin and metalloproteinase domain-containing protein 10 (749 aa).

Positions 1-19 are cleaved as a signal peptide; it reads MVLPTVLILLLSWAAGLGG. A propeptide spanning residues 20 to 214 is cleaved from the precursor; it reads QYGNPLNKYI…SGPELLRKKR (195 aa). Residues 20–673 lie on the Extracellular side of the membrane; it reads QYGNPLNKYI…SPQLYENIAE (654 aa). A Cysteine switch motif is present at residues 171–178; it reads GGCADHSV. Cysteine 173 contacts Zn(2+). One can recognise a Peptidase M12B domain in the interval 221 to 457; it reads NTCQLYIQTD…KRNNCFVESG (237 aa). 17 cysteine pairs are disulfide-bonded: cysteine 223-cysteine 314, cysteine 345-cysteine 452, cysteine 400-cysteine 436, cysteine 461-cysteine 496, cysteine 472-cysteine 485, cysteine 474-cysteine 480, cysteine 484-cysteine 516, cysteine 504-cysteine 512, cysteine 511-cysteine 537, cysteine 525-cysteine 544, cysteine 531-cysteine 563, cysteine 556-cysteine 568, cysteine 573-cysteine 599, cysteine 581-cysteine 608, cysteine 583-cysteine 598, cysteine 595-cysteine 640, and cysteine 633-cysteine 646. N-linked (GlcNAc...) asparagine glycosylation is found at asparagine 268 and asparagine 279. Histidine 384 provides a ligand contact to Zn(2+). Residue glutamate 385 is part of the active site. Residues histidine 388 and histidine 394 each coordinate Zn(2+). An N-linked (GlcNAc...) asparagine glycan is attached at asparagine 440. The Disintegrin domain maps to 458–552; the sequence is QPICGNGMVE…LCPASDPKPN (95 aa). N-linked (GlcNAc...) asparagine glycosylation occurs at asparagine 552. Residues 674–694 form a helical membrane-spanning segment; the sequence is WIVAHWWAVLLMGIALIMLMA. Residues 695–749 lie on the Cytoplasmic side of the membrane; that stretch reads GFIKICSVHTPSSNPKLPPPKPLPGTLKRRRPPQPIQQPPRQRPRESYQMGHMRR. Residues 705 to 749 form a disordered region; it reads PSSNPKLPPPKPLPGTLKRRRPPQPIQQPPRQRPRESYQMGHMRR. The short motif at 709–716 is the SH3-binding element; that stretch reads PKLPPPKP. Phosphothreonine is present on threonine 720. The SH3-binding signature appears at 723–729; the sequence is RRRPPQP. The segment at 735 to 749 is interaction with AP2A1, AP2A2 and AP2M1; it reads RQRPRESYQMGHMRR.

As to quaternary structure, forms a ternary EFNA5-EPHA3-ADAM10 complex mediating EFNA5 extracellular domain shedding by ADAM10 which regulates the EFNA5-EPHA3 complex internalization and function, the cleavage occurs in trans, with ADAM10 and its substrate being on the membranes of opposing cells. Interacts with the clathrin adapter AP2 complex subunits AP2A1, AP2A2, AP2B1, and AP2M1; this interaction facilitates ADAM10 endocytosis from the plasma membrane during long-term potentiation in hippocampal neurons. Forms a ternary complex composed of ADAM10, EPHA4 and CADH1; within the complex, ADAM10 cleaves CADH1 which disrupts adherens junctions. Interacts with EPHA2. Interacts with NGF in a divalent cation-dependent manner. Interacts with TSPAN14; the interaction promotes ADAM10 maturation and cell surface expression. Interacts with TSPAN5, TSPAN10, TSPAN14, TSPAN15, TSPAN17 and TSPAN33; these interactions regulate ADAM10 substrate specificity, endocytosis and turnover. Interacts (via extracellular domain) with TSPAN33 (via extracellular domain) and (via cytoplasmic domain) with AFDN; interaction with TSPAN33 allows the docking of ADAM10 to zonula adherens through a PDZ11-dependent interaction between TSPAN33 and PLEKHA7 while interaction with AFDN locks ADAM10 at zonula adherens. Interacts with DLG1; this interaction recruits ADAM10 to the cell membrane during long-term depression in hippocampal neurons. Interacts (via extracellular domain) with BACE1 (via extracellular domain). Interacts with FAM171A1. It depends on Zn(2+) as a cofactor. Post-translationally, the precursor is cleaved by furin and PCSK7. In terms of tissue distribution, expressed in the brain, specifically in neurons and astrocytes (at protein level). Expressed in inner and outer pillar cells of the organ of Corti (at protein level). Expressed in kidney and lung.

The protein localises to the cell membrane. The protein resides in the golgi apparatus membrane. Its subcellular location is the cytoplasmic vesicle. It localises to the clathrin-coated vesicle. It is found in the cell projection. The protein localises to the axon. The protein resides in the dendrite. Its subcellular location is the cell junction. It localises to the adherens junction. It is found in the cytoplasm. The catalysed reaction is Endopeptidase of broad specificity.. With respect to regulation, catalytically inactive when the propeptide is intact and associated with the mature enzyme. The disintegrin and cysteine-rich regions modulate access of substrates to exerts an inhibitory effect on the cleavage of ADAM10 substrates. Its function is as follows. Transmembrane metalloprotease which mediates the ectodomain shedding of a myriad of transmembrane proteins, including adhesion proteins, growth factor precursors and cytokines being essential for development and tissue homeostasis. Associates with six members of the tetraspanin superfamily TspanC8 which regulate its exit from the endoplasmic reticulum and its substrate selectivity. Cleaves the membrane-bound precursor of TNF-alpha to its mature soluble form. Responsible for the proteolytical release of soluble JAM3 from endothelial cells surface. Responsible for the proteolytic release of several other cell-surface proteins, including heparin-binding epidermal growth-like factor, ephrin-A2, CD44, CDH2 and for constitutive and regulated alpha-secretase cleavage of amyloid precursor protein (APP) at '687-Lys-|-Leu-688'. Contributes to the normal cleavage of the cellular prion protein. Involved in the cleavage of the adhesion molecule L1 at the cell surface and in released membrane vesicles, suggesting a vesicle-based protease activity. Also controls the proteolytic processing of Notch and mediates lateral inhibition during neurogenesis. Required for the development of type 1 transitional B cells into marginal zone B cells, probably by cleaving Notch. Responsible for the FasL ectodomain shedding and for the generation of the remnant ADAM10-processed FasL (FasL APL) transmembrane form. Also cleaves the ectodomain of the integral membrane proteins CORIN and ITM2B. Mediates the proteolytic cleavage of LAG3, leading to release the secreted form of LAG3. Mediates the proteolytic cleavage of IL6R and IL11RA, leading to the release of secreted forms of IL6R and IL11RA. Enhances the cleavage of CHL1 by BACE1. Cleaves NRCAM. Cleaves TREM2, resulting in shedding of the TREM2 ectodomain. Involved in the development and maturation of glomerular and coronary vasculature. During development of the cochlear organ of Corti, promotes pillar cell separation by forming a ternary complex with CADH1 and EPHA4 and cleaving CADH1 at adherens junctions. May regulate the EFNA5-EPHA3 signaling. The protein is Disintegrin and metalloproteinase domain-containing protein 10 (Adam10) of Mus musculus (Mouse).